We begin with the raw amino-acid sequence, 449 residues long: MFKRNDRSKNGFNALRLGVSFVLASSCLIGTAYADVPSNNLPSTTLTEEAVSATDSAAASTTLAAGDLYVAPNGNVSNPGTISSPTTLEAALTQIAPGKTIYLRGGNYAYSSTITIQRGNNGSNGSLKGLVAYGSEKPVLDFSAQAFGSANRGLQLNGDFWLVKGLEVKGAGDNGIYIGGSNNRIENVETHHNRDTGLQLGRYSPNASTSEWPANNLILNSYSHDNADPDNGEDADGFAAKLTVGSGNVFDNCLAAYNVDDGWDLYSKTETGPIGAVTILNSVAHHNGQTSDGTSTANSDGNGFKLGGDKIKVNHIVKNSIAFQNKKHGFTYNSNPGTITLTNNTSWDNGQSNFAFDKGEHVFINNLSFEGTASDKTSGTDQDNSNVWWKNKKTTNAKGLAASADDFVSLVPSITRGADGSIQLGDFLKLAKGSDLIGSGTPSGNIGAR.

The first 26 residues, 1-26 (MFKRNDRSKNGFNALRLGVSFVLASS), serve as a signal peptide directing secretion. Cys27 carries the N-palmitoyl cysteine lipid modification. A lipid anchor (S-diacylglycerol cysteine) is attached at Cys27. PbH1 repeat units follow at residues 158 to 179 (GDFW…IYIG), 180 to 202 (GSNN…QLGR), 213 to 242 (PANN…AAKL), 245 to 267 (GSGN…DLYS), 274 to 308 (IGAV…KLGG), 336 to 358 (PGTI…AFDK), and 359 to 391 (GEHV…WWKN). Asp236, Asp260, Asp261, and Asp264 together coordinate Ca(2+). The active-site Proton acceptor is Lys305.

Belongs to the polysaccharide lyase 9 family. It depends on Ca(2+) as a cofactor.

It is found in the secreted. The catalysed reaction is Eliminative cleavage of (1-&gt;4)-alpha-D-galacturonan to give oligosaccharides with 4-deoxy-alpha-D-galact-4-enuronosyl groups at their non-reducing ends.. Its activity is regulated as follows. Activated in presence of the surfactant polysorbate 20, while inhibited in the presence of polysorbate 40, polysorbate 60, polysorbate 80, Triton X-100 and sodium dodecyl sulfate. Inhibited by the metal chelator ethylenediaminetetraacetic acid (EDTA). Inhibited by iron and cobalt ions. Functionally, presents an endo-cleaving activity on the homogalacturonan (HG) region in pectin with a preference for low- or unmethylated pectin. This Paenibacillus polymyxa (strain SC2) (Bacillus polymyxa) protein is Pectate lyase L.